The chain runs to 117 residues: Protein GL2-INTERACTING REPRESSOR 2 (117 aa).

A disordered region spans residues 1-56 (MSRRNKNGPKLELRLNLSPPPSQASQMSLVRSPNRSNTTSPSSCVSSETNQEENET). The EAR motif lies at 10 to 15 (KLELRL). Positions 31-49 (RSPNRSNTTSPSSCVSSET) are enriched in low complexity.

Interacts with GL2. Interacts with TPL.

The protein localises to the nucleus. Functionally, acts as a negative regulator of root hair development redundantly with GIR1. GIR1 and GIR2 may function as adapter proteins that associate with GL2 and participate in the control of root hair formation. GIR1 and GIR2 may function as adapter proteins that associate with TPL and participate in the repression of root gene expression. This is Protein GL2-INTERACTING REPRESSOR 2 from Arabidopsis thaliana (Mouse-ear cress).